We begin with the raw amino-acid sequence, 902 residues long: Cytosolic 10-formyltetrahydrofolate dehydrogenase (902 aa).

The segment at 1–310 is hydrolase domain; it reads MKIAVIGQSL…LASNFFKGAA (310 aa). A Phosphoserine modification is found at S9. At K38 the chain carries N6-succinyllysine. 88–90 contacts (6R)-10-formyltetrahydrofolate; it reads QFI. H106 (proton donor) is an active-site residue. D142 is a (6R)-10-formyltetrahydrofolate binding site. Positions 318–395 constitute a Carrier domain; that stretch reads EAELVTAEAV…DFIQLLVRKL (78 aa). S354 carries the post-translational modification O-(pantetheine 4'-phosphoryl)serine. The interval 417-902 is aldehyde dehydrogenase domain; that stretch reads TVRMPHQLFI…LRVKTVTFEY (486 aa). NADP(+)-binding positions include 571-573 and 597-600; these read IPW and KPAQ. S629 and S631 each carry phosphoserine. Residues 630–635 and 650–651 each bind NADP(+); these read GSLVGQ and GS. K660 carries the post-translational modification N6-succinyllysine. E673 serves as the catalytic Proton acceptor. Residue 673-674 coordinates NADP(+); sequence EL. The Proton donor role is filled by C707. K757 provides a ligand contact to NADP(+). The residue at position 767 (K767) is an N6-succinyllysine. Residue 804–806 participates in NADP(+) binding; that stretch reads ESF. At S825 the chain carries Phosphoserine. K882 is subject to N6-acetyllysine.

This sequence in the N-terminal section; belongs to the GART family. It in the C-terminal section; belongs to the aldehyde dehydrogenase family. ALDH1L subfamily. Homotetramer. Post-translationally, phosphopantetheinylation at Ser-354 by AASDHPPT is required for the formyltetrahydrofolate dehydrogenase activity. As to expression, highly expressed in liver, pancreas and kidney.

The protein resides in the cytoplasm. Its subcellular location is the cytosol. The enzyme catalyses (6R)-10-formyltetrahydrofolate + NADP(+) + H2O = (6S)-5,6,7,8-tetrahydrofolate + CO2 + NADPH + H(+). In terms of biological role, cytosolic 10-formyltetrahydrofolate dehydrogenase that catalyzes the NADP(+)-dependent conversion of 10-formyltetrahydrofolate to tetrahydrofolate and carbon dioxide. May also have an NADP(+)-dependent aldehyde dehydrogenase activity towards formaldehyde, acetaldehyde, propionaldehyde, and benzaldehyde. The polypeptide is Cytosolic 10-formyltetrahydrofolate dehydrogenase (Homo sapiens (Human)).